A 471-amino-acid polypeptide reads, in one-letter code: Glutamate--tRNA ligase (471 aa).

Residues 9-19 carry the 'HIGH' region motif; the sequence is PSPTGYLHVGG. 4 residues coordinate Zn(2+): cysteine 98, cysteine 100, cysteine 125, and histidine 127. Residues 237 to 241 carry the 'KMSKS' region motif; sequence KLSKR. Lysine 240 provides a ligand contact to ATP.

Belongs to the class-I aminoacyl-tRNA synthetase family. Glutamate--tRNA ligase type 1 subfamily. In terms of assembly, monomer. Requires Zn(2+) as cofactor.

The protein resides in the cytoplasm. It carries out the reaction tRNA(Glu) + L-glutamate + ATP = L-glutamyl-tRNA(Glu) + AMP + diphosphate. Catalyzes the attachment of glutamate to tRNA(Glu) in a two-step reaction: glutamate is first activated by ATP to form Glu-AMP and then transferred to the acceptor end of tRNA(Glu). This is Glutamate--tRNA ligase from Shigella flexneri.